A 91-amino-acid polypeptide reads, in one-letter code: Bacterial microcompartment shell vertex protein PduN (91 aa).

In terms of domain architecture, BMV spans M1 to D87.

The protein belongs to the CcmL/EutN family. In terms of assembly, homopentamer. Interacts with shell protein PduA.

It is found in the bacterial microcompartment. It participates in polyol metabolism; 1,2-propanediol degradation. Its function is as follows. Probably forms vertices in the shell of the bacterial microcompartment (BMC) dedicated to 1,2-propanediol (1,2-PD) degradation. Required for structural integrity of BMCs and to mitigate propionaldehyde toxicity. The 1,2-PD-specific bacterial microcompartment (BMC) concentrates low levels of 1,2-PD catabolic enzymes, concentrates volatile reaction intermediates thus enhancing pathway flux and keeps the level of toxic, mutagenic propionaldehyde low. This Salmonella typhimurium (strain LT2 / SGSC1412 / ATCC 700720) protein is Bacterial microcompartment shell vertex protein PduN.